The chain runs to 292 residues: uncharacterized protein (292 aa).

Belongs to the glycosyltransferase 2 family. WaaE/KdtX subfamily.

This is an uncharacterized protein from Rickettsia prowazekii (strain Madrid E).